We begin with the raw amino-acid sequence, 378 residues long: Probable pectin lyase A (378 aa).

The first 18 residues, 1 to 18 (MKYQGLLAIAGCIASASA), serve as a signal peptide directing secretion. Cystine bridges form between cysteine 81-cysteine 100 and cysteine 90-cysteine 224. N-linked (GlcNAc...) asparagine glycosylation is present at asparagine 127. Residue arginine 254 is part of the active site. An intrachain disulfide couples cysteine 321 to cysteine 329.

The protein belongs to the polysaccharide lyase 1 family.

The protein localises to the secreted. It catalyses the reaction Eliminative cleavage of (1-&gt;4)-alpha-D-galacturonan methyl ester to give oligosaccharides with 4-deoxy-6-O-methyl-alpha-D-galact-4-enuronosyl groups at their non-reducing ends.. In terms of biological role, pectinolytic enzymes consist of four classes of enzymes: pectin lyase, polygalacturonase, pectin methylesterase and rhamnogalacturonase. Among pectinolytic enzymes, pectin lyase is the most important in depolymerization of pectin, since it cleaves internal glycosidic bonds of highly methylated pectins. The sequence is that of Probable pectin lyase A (pelA) from Neosartorya fischeri (strain ATCC 1020 / DSM 3700 / CBS 544.65 / FGSC A1164 / JCM 1740 / NRRL 181 / WB 181) (Aspergillus fischerianus).